The chain runs to 363 residues: NudC domain-containing protein 3 (363 aa).

The disordered stretch occupies residues 120 to 143; the sequence is AADLSGPQEVEKEEPPGSQDPEHT. A compositionally biased stretch (basic and acidic residues) spans 128-143; sequence EVEKEEPPGSQDPEHT. Residues 187-279 form the CS domain; that stretch reads AIRENYIWSQ…VGEYWWSAIL (93 aa). S342 and S357 each carry phosphoserine.

The chain is NudC domain-containing protein 3 (Nudcd3) from Mus musculus (Mouse).